The following is a 299-amino-acid chain: Probable lipid kinase YegS (299 aa).

The DAGKc domain occupies 2 to 133 (AEFPASLLIL…IDMAQVNKQT (132 aa)). ATP contacts are provided by residues threonine 40, 66–72 (GDGTINE), and threonine 95. Mg(2+) contacts are provided by leucine 215, aspartate 218, and leucine 220. Catalysis depends on glutamate 271, which acts as the Proton acceptor.

This sequence belongs to the diacylglycerol/lipid kinase family. YegS lipid kinase subfamily. Requires Mg(2+) as cofactor. It depends on Ca(2+) as a cofactor.

It is found in the cytoplasm. Probably phosphorylates lipids; the in vivo substrate is unknown. The sequence is that of Probable lipid kinase YegS from Escherichia coli O127:H6 (strain E2348/69 / EPEC).